Consider the following 497-residue polypeptide: METHKSLLFFTNYVLFLVFTLSFLPIPGLLASRLNPFEPGILMPTEEAEPVQVDDDDQLGTRWAVLVAGSMGFGNYRHQADVCHAYQLLRKGGLKEENIIVFMYDDIAKNELNPRPGVIINHPQGEDVYAGVPKDYTGEHVTAKNLYAVLLGDKSAVQGGSGKVVDSKPNDRIFLYYSDHGGPGVLGMPNLPYLYAMDFIEVLKKKHAAGGYKKMVIYVEACESGSIFEGIMPKDVDIYVTTASNAQESSWGTYCPGMEPSPPPEFTTCLGDLYSVAWMEDSESHNLKKETVKQQYSSVKARTSNYNTYAAGSHVMQYGNQSIKADKLYLFQGFDPASVNFPPNNAHLNAPMEVVNQRDAELHFMWQLYKRSENGSEKKKEILQQIKDAIKHRSHLDSSMQLIGDLLFGPKKASAILKSVREPGSPLVDDWGCLKSMVRVFETCCGSLTQYGMKHMRTFANICNAGVSHTSMEEACNAACSGHDAGQWHPTNQGYSA.

The first 31 residues, 1–31, serve as a signal peptide directing secretion; it reads METHKSLLFFTNYVLFLVFTLSFLPIPGLLA. Residue His180 is part of the active site. Catalysis depends on Cys222, which acts as the Nucleophile. Cys255 and Cys269 form a disulfide bridge. Asn320 and Asn374 each carry an N-linked (GlcNAc...) asparagine glycan. Disulfide bonds link Cys433/Cys463 and Cys445/Cys480.

The protein belongs to the peptidase C13 family.

Asparagine-specific endopeptidase involved in the processing of vacuolar seed protein precursors into the mature forms. The protein is Vacuolar-processing enzyme of Ricinus communis (Castor bean).